Here is a 404-residue protein sequence, read N- to C-terminus: Phosphoglycerate kinase (404 aa).

Residues 26 to 28 (DFN), Arg41, 64 to 67 (HLGR), Arg124, and Arg161 contribute to the substrate site. Residues Lys212, Gly301, Glu332, and 359–362 (GGDS) each bind ATP.

The protein belongs to the phosphoglycerate kinase family. In terms of assembly, monomer.

It is found in the cytoplasm. It catalyses the reaction (2R)-3-phosphoglycerate + ATP = (2R)-3-phospho-glyceroyl phosphate + ADP. Its pathway is carbohydrate degradation; glycolysis; pyruvate from D-glyceraldehyde 3-phosphate: step 2/5. The protein is Phosphoglycerate kinase of Mesomycoplasma hyopneumoniae (strain 232) (Mycoplasma hyopneumoniae).